A 1631-amino-acid polypeptide reads, in one-letter code: ABC transporter A family member 6 (1631 aa).

Transmembrane regions (helical) follow at residues Ile-25–Leu-45, Ser-242–Ile-262, Ser-285–Phe-305, Gly-317–Phe-337, Phe-346–Ser-366, Val-372–Ile-392, and Ile-416–Val-436. The ABC transporter 1 domain maps to Ile-491–Asn-724. Gly-527–Ser-534 contributes to the ATP binding site. The next 7 helical transmembrane spans lie at Ser-866–Lys-886, Ala-1047–Ala-1067, Trp-1099–Ile-1119, Phe-1127–Leu-1147, Ala-1158–Leu-1178, Ile-1198–Ile-1218, and Leu-1242–Leu-1262. The ABC transporter 2 domain maps to Ile-1309–Lys-1544. Gly-1347–Ser-1354 contacts ATP.

The protein belongs to the ABC transporter superfamily. ABCA family.

It is found in the membrane. The sequence is that of ABC transporter A family member 6 (abcA6) from Dictyostelium discoideum (Social amoeba).